Here is a 469-residue protein sequence, read N- to C-terminus: Adenosylhomocysteinase (469 aa).

Substrate is bound by residues threonine 63, aspartate 139, and glutamate 164. Threonine 165 to threonine 167 is a binding site for NAD(+). The substrate site is built by lysine 194 and aspartate 198. NAD(+) is bound by residues asparagine 199, glycine 228 to glycine 233, glutamate 251, asparagine 300, isoleucine 321 to histidine 323, and asparagine 375.

This sequence belongs to the adenosylhomocysteinase family. NAD(+) is required as a cofactor.

Its subcellular location is the cytoplasm. The catalysed reaction is S-adenosyl-L-homocysteine + H2O = L-homocysteine + adenosine. The protein operates within amino-acid biosynthesis; L-homocysteine biosynthesis; L-homocysteine from S-adenosyl-L-homocysteine: step 1/1. Its function is as follows. May play a key role in the regulation of the intracellular concentration of adenosylhomocysteine. The polypeptide is Adenosylhomocysteinase (Pseudomonas aeruginosa (strain LESB58)).